Reading from the N-terminus, the 499-residue chain is Na(+)/H(+) antiporter NhaB (499 aa).

The next 12 helical transmembrane spans lie at 38-58 (VSPF…LAMA), 62-82 (YPLQ…LTSA), 89-109 (VLAN…IYFM), 128-148 (LLLS…LDAL), 149-169 (TVTA…HRFA), 204-224 (LIMH…VGEP), 242-262 (LVMA…CAIL), 310-330 (VLVF…LLII), 349-369 (FEEA…VAVI), 393-413 (MFFV…VATV), 449-469 (ATPN…APLI), and 478-498 (IMAL…VILF).

This sequence belongs to the NhaB Na(+)/H(+) (TC 2.A.34) antiporter family.

It localises to the cell inner membrane. It catalyses the reaction 2 Na(+)(in) + 3 H(+)(out) = 2 Na(+)(out) + 3 H(+)(in). Its function is as follows. Na(+)/H(+) antiporter that extrudes sodium in exchange for external protons. The sequence is that of Na(+)/H(+) antiporter NhaB from Saccharophagus degradans (strain 2-40 / ATCC 43961 / DSM 17024).